The sequence spans 946 residues: Bifunctional glutamine synthetase adenylyltransferase/adenylyl-removing enzyme (946 aa).

The segment at 1–440 (MKPLSSPLQQ…VFNELIGDDE (440 aa)) is adenylyl removase. The interval 449–946 (SEQWRELWQD…ASWQKWLVEE (498 aa)) is adenylyl transferase.

It belongs to the GlnE family. The cofactor is Mg(2+).

It carries out the reaction [glutamine synthetase]-O(4)-(5'-adenylyl)-L-tyrosine + phosphate = [glutamine synthetase]-L-tyrosine + ADP. The enzyme catalyses [glutamine synthetase]-L-tyrosine + ATP = [glutamine synthetase]-O(4)-(5'-adenylyl)-L-tyrosine + diphosphate. Functionally, involved in the regulation of glutamine synthetase GlnA, a key enzyme in the process to assimilate ammonia. When cellular nitrogen levels are high, the C-terminal adenylyl transferase (AT) inactivates GlnA by covalent transfer of an adenylyl group from ATP to specific tyrosine residue of GlnA, thus reducing its activity. Conversely, when nitrogen levels are low, the N-terminal adenylyl removase (AR) activates GlnA by removing the adenylyl group by phosphorolysis, increasing its activity. The regulatory region of GlnE binds the signal transduction protein PII (GlnB) which indicates the nitrogen status of the cell. This Escherichia coli O127:H6 (strain E2348/69 / EPEC) protein is Bifunctional glutamine synthetase adenylyltransferase/adenylyl-removing enzyme.